A 622-amino-acid chain; its full sequence is Dynein axonemal assembly factor 1 (622 aa).

Polar residues predominate over residues 1–11 (MHPEVSEQQAD). Positions 1–80 (MHPEVSEQQA…ARNDRDDRGP (80 aa)) are disordered. The span at 32–42 (VRKEEINETKE) shows a compositional bias: basic and acidic residues. The segment covering 48-59 (STTSCQSQKQQS) has biased composition (low complexity). Residues 62–80 (SRLDCRSGYARNDRDDRGP) are compositionally biased toward basic and acidic residues. 6 LRR repeats span residues 101–123 (ALND…EEYT), 124–145 (GLRC…QAQS), 146–167 (ELRC…EPLQ), 168–189 (KLDA…SCLP), 190–211 (VLNT…QHLR), and 215–236 (RLCV…SVLE). The LRRCT domain occupies 249–288 (NPVTKHIPNYRRTVTVRLKQLTYLDDRPVFPKDRACAEAW). Residues 326 to 336 (EERKKARDKGE) show a composition bias toward basic and acidic residues. Disordered stretches follow at residues 326–360 (EERK…PLGE) and 399–431 (EEPD…TDGT). 2 stretches are compositionally biased toward low complexity: residues 337-351 (TPLP…TSPE) and 415-428 (VATA…VAAT). Position 349 is a phosphoserine (Ser-349). 2 positions are modified to phosphoserine: Ser-464 and Ser-487. 2 disordered regions span residues 480–503 (ISSL…EHTP) and 525–622 (RVPL…FGLD). Polar residues predominate over residues 539–550 (APETQGQVFSTT).

This sequence belongs to the DNAAF1 family.

The protein resides in the cell projection. It localises to the cilium. In terms of biological role, cilium-specific protein required for the stability of the ciliary architecture. Plays a role in cytoplasmic preassembly of dynein arms. Involved in regulation of microtubule-based cilia and actin-based brush border microvilli. The sequence is that of Dynein axonemal assembly factor 1 (Dnaaf1) from Peromyscus polionotus (Oldfield mouse).